The chain runs to 288 residues: Elongation factor Ts (288 aa).

The tract at residues 82-85 (TDFV) is involved in Mg(2+) ion dislocation from EF-Tu.

This sequence belongs to the EF-Ts family.

The protein localises to the cytoplasm. Associates with the EF-Tu.GDP complex and induces the exchange of GDP to GTP. It remains bound to the aminoacyl-tRNA.EF-Tu.GTP complex up to the GTP hydrolysis stage on the ribosome. The sequence is that of Elongation factor Ts from Chlorobaculum parvum (strain DSM 263 / NCIMB 8327) (Chlorobium vibrioforme subsp. thiosulfatophilum).